The chain runs to 130 residues: Small ribosomal subunit protein uS8B (130 aa).

This sequence belongs to the universal ribosomal protein uS8 family.

The polypeptide is Small ribosomal subunit protein uS8B (RpS15Ab) (Drosophila melanogaster (Fruit fly)).